The sequence spans 276 residues: MRVLETIAVLREYRKSLKESVGFVPTMGALHRGHQSLIERSLKENSHTIVSVFVNPTQFGANEDFSAYPRPLEKDLALCEKLGVSAVFVPKVSEMYPYEIEQRLKLYAPTFLSHSLEGAVRHGHFDGVVQVVLRLFHLVNPTRAYFGKKDAQQLLIIEHLVKDLLLDIEIAPCEIARDSDHLALSSRNVYLNATERKQALAIPKALENIKQAIDKGEKACEKLKKLGLEILETLEVDYLEFCNHKLEPLKTIEPANTLVLVAARVGKTRLLDNLWV.

27–34 is an ATP binding site; sequence MGALHRGH. H34 functions as the Proton donor in the catalytic mechanism. Q58 provides a ligand contact to (R)-pantoate. Beta-alanine is bound at residue Q58. Residue 147–150 coordinates ATP; the sequence is GKKD. Q153 is a binding site for (R)-pantoate. Residues A176 and 184–187 contribute to the ATP site; that span reads LSSR.

Belongs to the pantothenate synthetase family. As to quaternary structure, homodimer.

It localises to the cytoplasm. It carries out the reaction (R)-pantoate + beta-alanine + ATP = (R)-pantothenate + AMP + diphosphate + H(+). The protein operates within cofactor biosynthesis; (R)-pantothenate biosynthesis; (R)-pantothenate from (R)-pantoate and beta-alanine: step 1/1. Functionally, catalyzes the condensation of pantoate with beta-alanine in an ATP-dependent reaction via a pantoyl-adenylate intermediate. The sequence is that of Pantothenate synthetase from Helicobacter pylori (strain P12).